Here is a 341-residue protein sequence, read N- to C-terminus: Protein pelota homolog (341 aa).

The protein belongs to the eukaryotic release factor 1 family. Pelota subfamily. In terms of assembly, monomer. It depends on a divalent metal cation as a cofactor.

Its subcellular location is the cytoplasm. In terms of biological role, may function in recognizing stalled ribosomes, interact with stem-loop structures in stalled mRNA molecules, and effect endonucleolytic cleavage of the mRNA. May play a role in the release non-functional ribosomes and degradation of damaged mRNAs. Has endoribonuclease activity. In Sulfurisphaera tokodaii (strain DSM 16993 / JCM 10545 / NBRC 100140 / 7) (Sulfolobus tokodaii), this protein is Protein pelota homolog.